The primary structure comprises 602 residues: Protein NRT1/ PTR FAMILY 5.7 (602 aa).

The next 2 helical transmembrane spans lie at 56 to 73 (LSYF…TTIL) and 87 to 107 (WSGV…AYLG). Threonine 111 is subject to Phosphothreonine. A run of 10 helical transmembrane segments spans residues 112–132 (VLLA…SWFI), 152–172 (IAFF…KPSL), 197–217 (WWNA…VYIE), 220–240 (IGWG…FFIF), 337–357 (VKLL…GVCA), 381–401 (IVPP…TVTI), 422–442 (ILQR…IAAL), 465–485 (IWLA…LVGL), 500–520 (LGIA…NLLI), and 548–568 (FYWM…IVAM).

Belongs to the major facilitator superfamily. Proton-dependent oligopeptide transporter (POT/PTR) (TC 2.A.17) family. Expressed in shoots, stems, leaves and flowers.

It is found in the membrane. This is Protein NRT1/ PTR FAMILY 5.7 (NPF5.7) from Arabidopsis thaliana (Mouse-ear cress).